Consider the following 409-residue polypeptide: tRNA-specific 2-thiouridylase MnmA (409 aa).

Residues 40-47 (GLSGGVDS) and Leu-66 each bind ATP. Cys-127 functions as the Nucleophile in the catalytic mechanism. The cysteines at positions 127 and 237 are disulfide-linked. ATP is bound at residue Gly-152. The segment at 187 to 189 (KDQ) is interaction with tRNA. Cys-237 serves as the catalytic Cysteine persulfide intermediate. Positions 342–343 (RY) are interaction with tRNA.

The protein belongs to the MnmA/TRMU family.

It is found in the cytoplasm. It carries out the reaction S-sulfanyl-L-cysteinyl-[protein] + uridine(34) in tRNA + AH2 + ATP = 2-thiouridine(34) in tRNA + L-cysteinyl-[protein] + A + AMP + diphosphate + H(+). Functionally, catalyzes the 2-thiolation of uridine at the wobble position (U34) of tRNA, leading to the formation of s(2)U34. This is tRNA-specific 2-thiouridylase MnmA from Prochlorococcus marinus (strain MIT 9313).